The chain runs to 513 residues: Zinc finger CCCH-type with G patch domain-containing protein (513 aa).

The C3H1-type zinc-finger motif lies at 155–178 (PCSYYLEGECRFDETKCRFSHGAL). Acidic residues-rich tracts occupy residues 252-261 (DQDEDDELSS) and 271-283 (DSSDEAESDMDDL). The disordered stretch occupies residues 252-283 (DQDEDDELSSEESNSSMNDDSSDEAESDMDDL). The G-patch domain maps to 312–358 (TRGIGSKLMEKMGYIHGTGLGSDGRGIVTPVSAQILPQGRSLDACME). The segment covering 455-467 (DMAKVKQSLDRNS) has biased composition (basic and acidic residues). Residues 455-513 (DMAKVKQSLDRNSGDAQLQKRLQVQMESHKQELATLQAQERSLSKEQQTRKSKNKMFEF) form a disordered region. Over residues 468–480 (GDAQLQKRLQVQM) the composition is skewed to polar residues. Residues 496-513 (SLSKEQQTRKSKNKMFEF) show a composition bias toward basic and acidic residues.

The protein resides in the nucleus. Functionally, transcription repressor. The polypeptide is Zinc finger CCCH-type with G patch domain-containing protein (Drosophila yakuba (Fruit fly)).